The following is a 171-amino-acid chain: Ribosome maturation factor RimM (171 aa).

A PRC barrel domain is found at 96 to 170; the sequence is PDSYYHFQLE…TMTVRLPDGL (75 aa).

Belongs to the RimM family. Binds ribosomal protein uS19.

Its subcellular location is the cytoplasm. Functionally, an accessory protein needed during the final step in the assembly of 30S ribosomal subunit, possibly for assembly of the head region. Essential for efficient processing of 16S rRNA. May be needed both before and after RbfA during the maturation of 16S rRNA. It has affinity for free ribosomal 30S subunits but not for 70S ribosomes. This Heliobacterium modesticaldum (strain ATCC 51547 / Ice1) protein is Ribosome maturation factor RimM.